The chain runs to 131 residues: Hydrogenase maturation factor HypA (131 aa).

H2 provides a ligand contact to Ni(2+). The Zn(2+) site is built by C74, C77, C91, and C94.

Belongs to the HypA/HybF family.

In terms of biological role, involved in the maturation of [NiFe] hydrogenases. Required for nickel insertion into the metal center of the hydrogenase. In Streptomyces avermitilis (strain ATCC 31267 / DSM 46492 / JCM 5070 / NBRC 14893 / NCIMB 12804 / NRRL 8165 / MA-4680), this protein is Hydrogenase maturation factor HypA.